Here is a 254-residue protein sequence, read N- to C-terminus: Winged helix repair factor 1 (254 aa).

The short motif at 4–21 (KRRLLASEAFGVKRRRAP) is the Bipartite nuclear localization signal element. Winged helix domain regions lie at residues 32–104 (RAGS…GIVF), 120–179 (PCAG…LAVP), and 180–254 (GAGR…LPDT).

This sequence belongs to the STK19 family. In terms of assembly, monomer in solution. Homodimer; when bound to DNA. Component of a transcription-coupled nucleotide excision repair (TC-NER) complex composed of STK19, ERCC6, ERCC8, DDA1, DDB1, ELOF1 and UVSSA which assembles and interacts with the multiprotein RNA polymerase II complex when it stalls at DNA lesions.

The protein localises to the nucleus. Functionally, DNA-binding protein which is required for efficient transcription-coupled nucleotide excision repair (TC-NER). Acts as part of a TC-NER complex which assembles and interacts with RNA polymerase II (RNAPII) when it stalls at DNA lesions. TC-NER complex subunit UVSSA binds to the GTF2H1/p62 subunit of the TFIIH transcription factor complex, tethering TFIIH to the TC-NER complex. WHR1/STK19 then interacts with the XPD helicase subunit of TFIIH which guides TFIIH to DNA downstream of the stalled RNAPII, ensuring DNA repair. Directly interacts with RNAPII and also binds to downstream DNA. Promotes the timely removal of DNA damage-stalled RNAPII, allowing downstream NER factors to access DNA lesions. Required for monoubiquitination of UVSSA. Regulates repositioning and stabilization of UVSSA within the TC-NER complex. Stimulates ubiquitination of RNAPII complex member RBP1. Also binds to RNA and regulates the expression levels of many mRNAs. In Mus musculus (Mouse), this protein is Winged helix repair factor 1.